A 122-amino-acid chain; its full sequence is Small ribosomal subunit protein uS13 (122 aa).

The disordered stretch occupies residues N95–K122.

It belongs to the universal ribosomal protein uS13 family. In terms of assembly, part of the 30S ribosomal subunit. Forms a loose heterodimer with protein S19. Forms two bridges to the 50S subunit in the 70S ribosome.

Located at the top of the head of the 30S subunit, it contacts several helices of the 16S rRNA. In the 70S ribosome it contacts the 23S rRNA (bridge B1a) and protein L5 of the 50S subunit (bridge B1b), connecting the 2 subunits; these bridges are implicated in subunit movement. Contacts the tRNAs in the A and P-sites. The sequence is that of Small ribosomal subunit protein uS13 from Methylobacterium nodulans (strain LMG 21967 / CNCM I-2342 / ORS 2060).